The primary structure comprises 337 residues: MVREEVRVCTRTLQWKCVESRADNKRLYYGRFILSPLMKGQADTIGIAMRRALLGEIEGTCITCAKSEKIPHEYSNIVGIEESVHEILMNLKEIVLRSNLYGTRDASICVRGPRHVTAQDIISPPSVEIIDTTQHIASLTEPIDLCIGLQIERNRGYNMKTPKNSQDGRYPIDAVFMPVRNANHSIHSYGNGNEKQEILFLEIWTNGSLTPKEALHEASRNLIDLFIPFLHANEENFILKDNQNKVALPLFTFHDRLAKQRKNKKEISFQCIFIDQSELPPRTYNCLKRSNIHTLLDLLNNSQEDLMKIEHFRIEDVKQILGILQKHFAIDLPKNKF.

An alpha N-terminal domain (alpha-NTD) region spans residues 1–232 (MVREEVRVCT…IDLFIPFLHA (232 aa)). An alpha C-terminal domain (alpha-CTD) region spans residues 266–337 (EISFQCIFID…FAIDLPKNKF (72 aa)).

This sequence belongs to the RNA polymerase alpha chain family. In plastids the minimal PEP RNA polymerase catalytic core is composed of four subunits: alpha, beta, beta', and beta''. When a (nuclear-encoded) sigma factor is associated with the core the holoenzyme is formed, which can initiate transcription.

Its subcellular location is the plastid. The protein resides in the chloroplast. The enzyme catalyses RNA(n) + a ribonucleoside 5'-triphosphate = RNA(n+1) + diphosphate. In terms of biological role, DNA-dependent RNA polymerase catalyzes the transcription of DNA into RNA using the four ribonucleoside triphosphates as substrates. The sequence is that of DNA-directed RNA polymerase subunit alpha from Buxus microphylla (Littleleaf boxwood).